The chain runs to 542 residues: Cytochrome P450 27C1 (542 aa).

The transit peptide at 1 to 80 (MQTSAMALLA…LAAMPGPRTL (80 aa)) directs the protein to the mitochondrion. Residues 20 to 75 (APERGGLLGGGAPRRPQPAGARLPAGARAEDKGAGRPGSPPGGGRAEGPRSLAAMP) form a disordered region. Residues 32–46 (PRRPQPAGARLPAGA) show a composition bias toward low complexity. Residue Cys-488 coordinates heme.

It belongs to the cytochrome P450 family. Requires heme as cofactor. Widely expressed, with highest levels in the liver, kidney and pancreas. As to expression, expressed in the skin (at protein level).

The protein localises to the mitochondrion membrane. The enzyme catalyses all-trans-retinol + 2 reduced [adrenodoxin] + O2 + 2 H(+) = all-trans-3,4-didehydroretinol + 2 oxidized [adrenodoxin] + 2 H2O. It carries out the reaction all-trans-retinol + 2 reduced [adrenodoxin] + O2 + 2 H(+) = all-trans-4-hydroxyretinol + 2 oxidized [adrenodoxin] + H2O. The catalysed reaction is all-trans-retinol + 2 reduced [adrenodoxin] + O2 + 2 H(+) = all-trans-3-hydroxyretinol + 2 oxidized [adrenodoxin] + H2O. It functions in the pathway cofactor metabolism; retinol metabolism. A cytochrome P450 monooxygenase that catalyzes the 3,4 desaturation of all-trans-retinol (also called vitamin A1) to all-trans-3,4-didehydroretinol (also called vitamin A2) in the skin. Desaturates with lower efficiency all-trans retinal and all-trans retinoic acid. Forms minor amounts of 3-hydroxy and 4-hydroxy all-trans-retinol derivatives. Mechanistically, uses molecular oxygen inserting one oxygen atom into a substrate and reducing the second into a water molecule. Two electrons are provided by NADPH via a two-protein mitochondrial transfer system comprising flavoprotein FDXR (adrenodoxin/ferredoxin reductase) and nonheme iron-sulfur protein FDX1 or FDX2 (adrenodoxin/ferredoxin). The protein is Cytochrome P450 27C1 of Homo sapiens (Human).